Reading from the N-terminus, the 1109-residue chain is Pesticidal crystal protein Cry28Aa (1109 aa).

It belongs to the delta endotoxin family.

In terms of biological role, promotes colloidosmotic lysis by binding to the midgut epithelial cells of insects. This is Pesticidal crystal protein Cry28Aa (cry28Aa) from Bacillus thuringiensis subsp. finitimus.